The sequence spans 338 residues: Large ribosomal subunit protein uL10 (338 aa).

A disordered region spans residues 303 to 338; the sequence is VEVSAAPAAEEEKEEEKKEEEKKEEDTGAAGLALLF. Over residues 317-328 the composition is skewed to basic and acidic residues; that stretch reads EEKKEEEKKEED.

This sequence belongs to the universal ribosomal protein uL10 family. In terms of assembly, part of the 50S ribosomal subunit. Forms part of the ribosomal stalk which helps the ribosome interact with GTP-bound translation factors. Forms a heptameric L10(L12)2(L12)2(L12)2 complex, where L10 forms an elongated spine to which the L12 dimers bind in a sequential fashion.

Forms part of the ribosomal stalk, playing a central role in the interaction of the ribosome with GTP-bound translation factors. The chain is Large ribosomal subunit protein uL10 from Methanocaldococcus jannaschii (strain ATCC 43067 / DSM 2661 / JAL-1 / JCM 10045 / NBRC 100440) (Methanococcus jannaschii).